The primary structure comprises 438 residues: Adenylosuccinate synthetase (438 aa).

Residues 13–19 (GDEGKGK) and 41–43 (GHT) contribute to the GTP site. Asp14 acts as the Proton acceptor in catalysis. Positions 14 and 41 each coordinate Mg(2+). Residues 14-17 (DEGK), 39-42 (NAGH), Thr130, Arg144, Gln225, Thr240, and Arg312 contribute to the IMP site. The active-site Proton donor is His42. Position 308–314 (308–314 (ATTGRQR)) interacts with substrate. GTP is bound by residues Arg314, 340–342 (KLD), and 422–424 (STG).

Belongs to the adenylosuccinate synthetase family. Homodimer. The cofactor is Mg(2+).

It localises to the cytoplasm. It carries out the reaction IMP + L-aspartate + GTP = N(6)-(1,2-dicarboxyethyl)-AMP + GDP + phosphate + 2 H(+). It participates in purine metabolism; AMP biosynthesis via de novo pathway; AMP from IMP: step 1/2. Functionally, plays an important role in the de novo pathway of purine nucleotide biosynthesis. Catalyzes the first committed step in the biosynthesis of AMP from IMP. This Ruthia magnifica subsp. Calyptogena magnifica protein is Adenylosuccinate synthetase.